Here is a 486-residue protein sequence, read N- to C-terminus: UDP-N-acetylmuramate--L-alanine ligase (486 aa).

Residue glycine 129–threonine 135 coordinates ATP.

It belongs to the MurCDEF family.

The protein resides in the cytoplasm. The enzyme catalyses UDP-N-acetyl-alpha-D-muramate + L-alanine + ATP = UDP-N-acetyl-alpha-D-muramoyl-L-alanine + ADP + phosphate + H(+). Its pathway is cell wall biogenesis; peptidoglycan biosynthesis. In terms of biological role, cell wall formation. The chain is UDP-N-acetylmuramate--L-alanine ligase from Vibrio vulnificus (strain CMCP6).